A 385-amino-acid polypeptide reads, in one-letter code: Benzoate O-methyltransferase (385 aa).

Residue tyrosine 18 coordinates S-adenosyl-L-homocysteine. Benzoate is bound at residue glutamine 25. S-adenosyl-L-homocysteine is bound by residues cysteine 59, asparagine 64, aspartate 106, leucine 107, serine 145, and tyrosine 146. Position 167 (tryptophan 167) interacts with benzoate. 4 residues coordinate Mg(2+): asparagine 184, glutamate 270, phenylalanine 272, and asparagine 273.

The protein belongs to the methyltransferase superfamily. Type-7 methyltransferase family. SABATH subfamily. Requires Mg(2+) as cofactor.

It catalyses the reaction benzoate + S-adenosyl-L-methionine = methyl benzoate + S-adenosyl-L-homocysteine. Functionally, methyltransferase involved in the biosynthesis of methyl benzoate in response to stresses. Utilizes exclusively benzoic acid (BA) as substrate. In Zea mays (Maize), this protein is Benzoate O-methyltransferase (OMT8).